The following is a 572-amino-acid chain: Mitochondrial distribution and morphology protein 34 (572 aa).

An SMP-LTD domain is found at Met-1–Leu-195. Disordered regions lie at residues Leu-208–Leu-236, Pro-296–Pro-405, Arg-455–Asn-518, and Asn-551–His-572. Over residues Pro-296–Phe-347 the composition is skewed to polar residues. Residues Arg-358 to Arg-370 are compositionally biased toward basic residues. Basic and acidic residues predominate over residues Val-371–Asp-381. Polar residues-rich tracts occupy residues Ser-387–Ile-401 and Ala-498–Ser-511.

The protein belongs to the MDM34 family. In terms of assembly, component of the ER-mitochondria encounter structure (ERMES) or MDM complex, composed of mmm1, mdm10, mdm12 and mdm34.

Its subcellular location is the mitochondrion outer membrane. Functionally, component of the ERMES/MDM complex, which serves as a molecular tether to connect the endoplasmic reticulum (ER) and mitochondria. Components of this complex are involved in the control of mitochondrial shape and protein biogenesis, and function in nonvesicular lipid trafficking between the ER and mitochondria. Mdm34 is required for the interaction of the ER-resident membrane protein mmm1 and the outer mitochondrial membrane-resident beta-barrel protein mdm10. This chain is Mitochondrial distribution and morphology protein 34, found in Neosartorya fischeri (strain ATCC 1020 / DSM 3700 / CBS 544.65 / FGSC A1164 / JCM 1740 / NRRL 181 / WB 181) (Aspergillus fischerianus).